A 365-amino-acid chain; its full sequence is Peptide chain release factor 2 (365 aa).

An N5-methylglutamine modification is found at glutamine 252.

This sequence belongs to the prokaryotic/mitochondrial release factor family. Methylated by PrmC. Methylation increases the termination efficiency of RF2.

The protein resides in the cytoplasm. Functionally, peptide chain release factor 2 directs the termination of translation in response to the peptide chain termination codons UGA and UAA. The protein is Peptide chain release factor 2 of Pectobacterium atrosepticum (strain SCRI 1043 / ATCC BAA-672) (Erwinia carotovora subsp. atroseptica).